Reading from the N-terminus, the 162-residue chain is Retinoic acid receptor responder protein 2 (162 aa).

The signal sequence occupies residues 1 to 20 (MWQLLLPLALGLGTMGLGRA). 3 disulfide bridges follow: C77-C87, C98-C117, and C101-C135. Residues 156–162 (FIKALSP) constitute a propeptide that is removed on maturation.

Post-translationally, secreted in an inactive precursor form, prochemerin, which is proteolytically processed by a variety of extracellular proteases to generate forms with differing levels of bioactivity. For example, the removal of five amino acids results in chemerin-157, which exhibits the highest activity, while removal of six amino acids results in chemerin-156 which has slightly less activity. Some proteases are able to cleave at more than one site and chemerin forms may be sequentially processed by different enzymes to modulate activity levels. The coordinated expression and activity of chemerin-modifying enzymes is essential for regulating its bioactivation, inactivation and, consequently, biological function. Cathepsin G cleaves six C-terminal amino acids from prochemerin (chemerin-156), elastase is able to cleave five (chemerin-157), seven (chemerin-155) or ten (chemerin-152), plasmin cleaves four amino acids (chemerin-158), and tryptase cleaves four (chemerin-158) or seven (chemerin-155). Multiple cleavages might be required to fully activate chemerin, with an initial tryptase cleavage resulting in chemerin with low activity (chemerin-158), and a second cleavage by carboxypeptidase N or B producing highly active chemerin (chemerin-157).

The protein resides in the secreted. Its function is as follows. Adipocyte-secreted protein (adipokine) that regulates adipogenesis, metabolism and inflammation through activation of the chemokine-like receptor 1 (CMKLR1). Also acts as a ligand for CMKLR2. Can also bind to C-C chemokine receptor-like 2 (CCRL2), but with a lower affinity than it does to CMKLR1 or CMKLR2. Positively regulates adipocyte differentiation, modulates the expression of adipocyte genes involved in lipid and glucose metabolism and might play a role in angiogenesis, a process essential for the expansion of white adipose tissue. Also acts as a pro-inflammatory adipokine, causing an increase in secretion of pro-inflammatory and prodiabetic adipokines, which further impair adipose tissue metabolic function and have negative systemic effects including impaired insulin sensitivity, altered glucose and lipid metabolism, and a decrease in vascular function in other tissues. Can have both pro- and anti-inflammatory properties depending on the modality of enzymatic cleavage by different classes of proteases. Acts as a chemotactic factor for leukocyte populations expressing CMKLR1, particularly immature plasmacytoid dendritic cells, but also immature myeloid DCs, macrophages and natural killer cells. Exerts an anti-inflammatory role by preventing TNF/TNFA-induced VCAM1 expression and monocytes adhesion in vascular endothelial cells. The effect is mediated via inhibiting activation of NF-kappa-B and CRK/p38 through stimulation of AKT1/NOS3 signaling and nitric oxide production. Exhibits an antimicrobial function in the skin. This Bos taurus (Bovine) protein is Retinoic acid receptor responder protein 2 (RARRES2).